The primary structure comprises 368 residues: tRNA-specific 2-thiouridylase MnmA (368 aa).

ATP contacts are provided by residues 11–18 (GMSGGVDS) and methionine 37. Residues 97-99 (NPD) form an interaction with target base in tRNA region. The Nucleophile role is filled by cysteine 102. The cysteines at positions 102 and 199 are disulfide-linked. Residue glycine 127 participates in ATP binding. Positions 149–151 (KDQ) are interaction with tRNA. The active-site Cysteine persulfide intermediate is the cysteine 199. Residues 311 to 312 (RY) form an interaction with tRNA region.

This sequence belongs to the MnmA/TRMU family.

Its subcellular location is the cytoplasm. It carries out the reaction S-sulfanyl-L-cysteinyl-[protein] + uridine(34) in tRNA + AH2 + ATP = 2-thiouridine(34) in tRNA + L-cysteinyl-[protein] + A + AMP + diphosphate + H(+). Functionally, catalyzes the 2-thiolation of uridine at the wobble position (U34) of tRNA, leading to the formation of s(2)U34. This is tRNA-specific 2-thiouridylase MnmA from Baumannia cicadellinicola subsp. Homalodisca coagulata.